The sequence spans 299 residues: Urease accessory protein UreD (299 aa).

It belongs to the UreD family. In terms of assembly, ureD, UreF and UreG form a complex that acts as a GTP-hydrolysis-dependent molecular chaperone, activating the urease apoprotein by helping to assemble the nickel containing metallocenter of UreC. The UreE protein probably delivers the nickel.

The protein resides in the cytoplasm. In terms of biological role, required for maturation of urease via the functional incorporation of the urease nickel metallocenter. In Prochlorococcus marinus (strain MIT 9303), this protein is Urease accessory protein UreD.